The chain runs to 110 residues: Large ribosomal subunit protein uL22 (110 aa).

This sequence belongs to the universal ribosomal protein uL22 family. In terms of assembly, part of the 50S ribosomal subunit.

This protein binds specifically to 23S rRNA; its binding is stimulated by other ribosomal proteins, e.g. L4, L17, and L20. It is important during the early stages of 50S assembly. It makes multiple contacts with different domains of the 23S rRNA in the assembled 50S subunit and ribosome. Functionally, the globular domain of the protein is located near the polypeptide exit tunnel on the outside of the subunit, while an extended beta-hairpin is found that lines the wall of the exit tunnel in the center of the 70S ribosome. This Solidesulfovibrio magneticus (strain ATCC 700980 / DSM 13731 / RS-1) (Desulfovibrio magneticus) protein is Large ribosomal subunit protein uL22.